An 882-amino-acid polypeptide reads, in one-letter code: Liprin-beta-2 (882 aa).

Residues 101–303 (AASNETYQER…DKDRRIEELT (203 aa)) are a coiled coil. 3 positions are modified to phosphoserine: serine 328, serine 362, and serine 386. Residues 339-554 (RKWNTTNKSP…SRTRDTKGQK (216 aa)) form a disordered region. Positions 388 to 399 (EDLRRESGDKCV) are enriched in basic and acidic residues. Polar residues-rich tracts occupy residues 442–457 (PTASLQPDSSGSSQPK) and 481–495 (SSASSGTESSPQSPV). Phosphoserine is present on residues serine 502 and serine 518. Basic residues predominate over residues 502 to 515 (SPKGIKKFWGKIRR). SAM domains lie at 564-628 (WSTE…INAK), 636-699 (LDHI…LHVN), and 724-789 (WSNH…KFNA).

Belongs to the liprin family. Liprin-beta subfamily. In terms of assembly, forms homodimers and heterodimers. In terms of tissue distribution, expressed widely. Strong expression in liver, kidney, intestine, heart, lung and testis. Low expression in brain and thymus.

Functionally, may regulate the disassembly of focal adhesions. Did not bind receptor-like tyrosine phosphatases type 2A. This Mus musculus (Mouse) protein is Liprin-beta-2 (Ppfibp2).